A 253-amino-acid polypeptide reads, in one-letter code: Peptidase inhibitor R3HDML (253 aa).

An N-terminal signal peptide occupies residues M1–L24. The propeptide occupies I25–R56. The SCP domain maps to L67–Y207. N-linked (GlcNAc...) asparagine glycosylation occurs at N120.

This sequence belongs to the CRISP family.

The protein localises to the secreted. Its function is as follows. Putative serine protease inhibitor. This chain is Peptidase inhibitor R3HDML (R3HDML), found in Homo sapiens (Human).